The chain runs to 569 residues: Intraflagellar transport protein 74/72 (569 aa).

Coiled coils occupy residues 75–156, 201–231, and 271–298; these read ITAT…TRNE, YRSL…VAAN, and AITL…AESH.

The protein belongs to the IFT74 family.

The protein resides in the cell projection. The protein localises to the cilium. It is found in the flagellum. Its subcellular location is the cytoplasm. It localises to the cytoskeleton. The protein resides in the flagellum axoneme. The protein localises to the flagellum basal body. In terms of biological role, component of the intraflagellar transport complex B (IFT-B) involved in flagellar assembly. The chain is Intraflagellar transport protein 74/72 from Giardia intestinalis (strain ATCC 50803 / WB clone C6) (Giardia lamblia).